The chain runs to 152 residues: Large ribosomal subunit protein bL9 (152 aa).

The protein belongs to the bacterial ribosomal protein bL9 family.

Functionally, binds to the 23S rRNA. This chain is Large ribosomal subunit protein bL9, found in Trichormus variabilis (strain ATCC 29413 / PCC 7937) (Anabaena variabilis).